We begin with the raw amino-acid sequence, 472 residues long: Glutamine synthetase (472 aa).

A GS beta-grasp domain is found at Asn17 to Thr101. The 364-residue stretch at Pro109–Ala472 folds into the GS catalytic domain. Mg(2+) is bound by residues Glu134 and Glu136. Residue Glu212 participates in ATP binding. Positions 217 and 225 each coordinate Mg(2+). Residues Asn269–Gly270 and Gly270 contribute to the L-glutamate site. Mg(2+) is bound at residue His274. ATP is bound by residues Asn276–Ser278 and Ser278. Arg326, Glu332, and Arg344 together coordinate L-glutamate. Arg344, Arg349, and Lys357 together coordinate ATP. Glu362 is a Mg(2+) binding site. An L-glutamate-binding site is contributed by Arg364. An O-AMP-tyrosine modification is found at Tyr402.

It belongs to the glutamine synthetase family. In terms of assembly, oligomer of 12 subunits arranged in the form of two hexameric ring. Mg(2+) serves as cofactor.

It localises to the cytoplasm. It catalyses the reaction L-glutamate + NH4(+) + ATP = L-glutamine + ADP + phosphate + H(+). The activity of this enzyme could be controlled by adenylation under conditions of abundant glutamine. Catalyzes the ATP-dependent biosynthesis of glutamine from glutamate and ammonia. The polypeptide is Glutamine synthetase (Haemophilus influenzae (strain ATCC 51907 / DSM 11121 / KW20 / Rd)).